A 449-amino-acid polypeptide reads, in one-letter code: MFS-type transporter 1 (449 aa).

A compositionally biased stretch (basic and acidic residues) spans 1–37 (MTHSSSNEHEKEDDRRASDDMMDRDDQNAKEEQDVSK). Positions 1-43 (MTHSSSNEHEKEDDRRASDDMMDRDDQNAKEEQDVSKDAPPVN) are disordered. The next 6 helical transmembrane spans lie at 61-81 (VAGG…IGIF), 97-117 (TISW…LVVG), 127-147 (YILL…SLST), 152-172 (ILLS…TPAV), 185-205 (LANG…PIMF), and 212-232 (VGFP…LIIA). The N-linked (GlcNAc...) asparagine glycan is linked to asparagine 233. A run of 6 helical transmembrane segments spans residues 262–282 (LLTT…INYI), 298–318 (YLIP…GFVA), 326–346 (VHTF…LPAA), 349–369 (APII…VAIL), 390–410 (FGVL…FVAH), and 420–440 (IWTG…RISL).

Belongs to the major facilitator superfamily. Monocarboxylate porter (TC 2.A.1.13) family.

It localises to the cell membrane. The catalysed reaction is erythrostominone(in) = erythrostominone(out). The enzyme catalyses deoxyerythrostominone(in) = deoxyerythrostominone(out). It catalyses the reaction epierythrostominol(in) = epierythrostominol(out). It carries out the reaction deoxyerythrostominol(in) = deoxyerythrostominol(out). MFS-type transporter that mediates the secretion of the 4 major naphthoquinone derivatives produced, erythrostominone (NQ1), deoxyerythrostominone (NQ2), epierythrostominol (NQ4), and deoxyerythrostominol (NQ5), as well as of 3 newly identified naphthoquinone derivatives termed NQ7, NQ8 and NQ9. The sequence is that of MFS-type transporter 1 from Ophiocordyceps sp. (strain BCC 1869) (Entomopathogenic fungus).